The primary structure comprises 168 residues: Photosystem I assembly protein Ycf3 (168 aa).

3 TPR repeats span residues 35 to 68, 72 to 105, and 120 to 153; these read AFTYYRDGMSAQSEGNYAEALQNYYEATRPEIDP, SYILYNIGLIHTSNGEHTKALEYYFRALERNPFL, and GEQAIRQGDSEIAEAWSDQAAEYWKQAIALTPGN.

Belongs to the Ycf3 family.

The protein localises to the plastid. It localises to the chloroplast thylakoid membrane. Functionally, essential for the assembly of the photosystem I (PSI) complex. May act as a chaperone-like factor to guide the assembly of the PSI subunits. The polypeptide is Photosystem I assembly protein Ycf3 (Liriodendron tulipifera (Tuliptree)).